The chain runs to 480 residues: Ammonium transporter 3 member 3 (480 aa).

The next 11 membrane-spanning stretches (helical) occupy residues 31 to 51 (SATL…GSIV), 59 to 79 (SAFM…VWAY), 135 to 155 (MVYF…GSLL), 169 to 189 (LWIT…GFLF), 198 to 218 (GGYV…YWVG), 233 to 253 (ILLV…FNGG), 265 to 287 (AVLN…DVFF), 292 to 314 (SVIG…AGLV), 318 to 337 (AAIV…MMVL), 361 to 381 (GFLG…SLFL), and 407 to 427 (LFVT…ISLI).

The protein belongs to the ammonia transporter channel (TC 1.A.11.2) family.

The protein localises to the membrane. Its function is as follows. Involved in ammonium transport. The polypeptide is Ammonium transporter 3 member 3 (AMT3-3) (Oryza sativa subsp. japonica (Rice)).